The primary structure comprises 372 residues: Probable peptidoglycan glycosyltransferase FtsW (372 aa).

Topologically, residues 1 to 12 (MQKKSTISWSYD) are cytoplasmic. Residues 13-33 (AWIVICTLSLLALGLLMVASA) traverse the membrane as a helical segment. At 34-45 (SMVISDRQFGYP) the chain is on the periplasmic side. A helical transmembrane segment spans residues 46–66 (FHYFIRHLIYLSLGLTLAWVA). Topologically, residues 67–77 (SRVPIKVWKTY) are cytoplasmic. A helical transmembrane segment spans residues 78–98 (SGYLFLVGFLLLILVLAPVIG). The Periplasmic portion of the chain corresponds to 99–109 (KTVNGSRRWIQ). A helical membrane pass occupies residues 110–130 (LGFISLQVSEVVKFVTILYLA). Topologically, residues 131 to 142 (SFLQRYQSEVQK) are cytoplasmic. The chain crosses the membrane as a helical span at residues 143–163 (ELKGFLKPMLLVGILSGLLLL). The Periplasmic portion of the chain corresponds to 164 to 165 (EP). A helical transmembrane segment spans residues 166–186 (DFGAAVVITMTCLALLFLAGV). Arginine 187 is a topological domain (cytoplasmic). A helical membrane pass occupies residues 188 to 208 (LWPFCVLLVLVAGSLILLAIL). The Periplasmic segment spans residues 209–277 (SPYRLQRLTS…LFAVLAEELG (69 aa)). A helical transmembrane segment spans residues 278-298 (LIGEILLMGLFVLLIGRIILI). Over 299 to 315 (GRRAENSNQLYSAYLAY) the chain is Cytoplasmic. Residues 316–336 (GIALWLGLQVIINIGVTAGVL) form a helical membrane-spanning segment. Over 337–342 (PTKGLT) the chain is Periplasmic. A helical membrane pass occupies residues 343–363 (LPFISYGGSSLLMNCLAIGVI). Over 364 to 372 (LRIAYETEN) the chain is Cytoplasmic.

It belongs to the SEDS family. FtsW subfamily.

The protein resides in the cell inner membrane. The catalysed reaction is [GlcNAc-(1-&gt;4)-Mur2Ac(oyl-L-Ala-gamma-D-Glu-L-Lys-D-Ala-D-Ala)](n)-di-trans,octa-cis-undecaprenyl diphosphate + beta-D-GlcNAc-(1-&gt;4)-Mur2Ac(oyl-L-Ala-gamma-D-Glu-L-Lys-D-Ala-D-Ala)-di-trans,octa-cis-undecaprenyl diphosphate = [GlcNAc-(1-&gt;4)-Mur2Ac(oyl-L-Ala-gamma-D-Glu-L-Lys-D-Ala-D-Ala)](n+1)-di-trans,octa-cis-undecaprenyl diphosphate + di-trans,octa-cis-undecaprenyl diphosphate + H(+). It functions in the pathway cell wall biogenesis; peptidoglycan biosynthesis. Peptidoglycan polymerase that is essential for cell division. The protein is Probable peptidoglycan glycosyltransferase FtsW of Coxiella burnetii (strain RSA 493 / Nine Mile phase I).